A 426-amino-acid chain; its full sequence is Histidine--tRNA ligase (426 aa).

It belongs to the class-II aminoacyl-tRNA synthetase family. Homodimer.

It is found in the cytoplasm. It catalyses the reaction tRNA(His) + L-histidine + ATP = L-histidyl-tRNA(His) + AMP + diphosphate + H(+). The sequence is that of Histidine--tRNA ligase from Prochlorococcus marinus (strain AS9601).